Consider the following 316-residue polypeptide: Coiled-coil domain-containing protein 42 (316 aa).

Coiled coils occupy residues 39-146 (SPSI…SAKL) and 178-232 (LVSM…DRAR).

It belongs to the CFAP73 family. As to quaternary structure, interacts with ODF1 and ODF2. Interacts with CCDC38. Interacts with CCDC146. Interacts with CFAP53.

Its subcellular location is the cytoplasm. The protein resides in the perinuclear region. The protein localises to the cytoskeleton. It is found in the cell projection. It localises to the cilium. Its subcellular location is the flagellum. The protein resides in the microtubule organizing center. The protein localises to the centrosome. Functionally, essential for male fertility. Required for sperm development. This chain is Coiled-coil domain-containing protein 42, found in Homo sapiens (Human).